Reading from the N-terminus, the 228-residue chain is Small ribosomal subunit protein uS3 (228 aa).

In terms of domain architecture, KH type-2 spans 39–107; sequence VRAYLQDKLK…PVHINIEEIR (69 aa).

This sequence belongs to the universal ribosomal protein uS3 family. Part of the 30S ribosomal subunit. Forms a tight complex with proteins S10 and S14.

Binds the lower part of the 30S subunit head. Binds mRNA in the 70S ribosome, positioning it for translation. This chain is Small ribosomal subunit protein uS3, found in Ectopseudomonas mendocina (strain ymp) (Pseudomonas mendocina).